A 406-amino-acid polypeptide reads, in one-letter code: NADH-ubiquinone oxidoreductase 49 kDa subunit (406 aa).

It belongs to the complex I 49 kDa subunit family. Complex I is composed of 45 different subunits. Component of the iron-sulfur (IP) fragment of the enzyme.

The protein localises to the mitochondrion inner membrane. It carries out the reaction a ubiquinone + NADH + 5 H(+)(in) = a ubiquinol + NAD(+) + 4 H(+)(out). Core subunit of the mitochondrial membrane respiratory chain NADH dehydrogenase (Complex I) that is believed to belong to the minimal assembly required for catalysis. Complex I functions in the transfer of electrons from NADH to the respiratory chain. The immediate electron acceptor for the enzyme is believed to be ubiquinone. In Dictyostelium discoideum (Social amoeba), this protein is NADH-ubiquinone oxidoreductase 49 kDa subunit (nad7).